The following is a 994-amino-acid chain: NACHT, LRR and PYD domains-containing protein 4 (994 aa).

A Pyrin domain is found at 1-94 (MAASFFSDFG…CMKVMRERTG (94 aa)). Residues 149–472 (RTVIIQGPQG…FYLLKSHLDH (324 aa)) enclose the NACHT domain. 155–162 (GPQGIGKT) is a binding site for ATP. LRR repeat units lie at residues 637–660 (SGHL…TWCN), 698–721 (YLSF…LNYP), 722–745 (AGNV…VLAG), 750–777 (NKKL…LCSP), 806–833 (NKSV…ALKH), 863–886 (NQNL…LLCR), 920–943 (SKTL…VLCE), and 949–972 (ECAL…LLTA).

Belongs to the NLRP family. Interacts with CHUK/IKKA, inhibiting its kinase activity.

In terms of biological role, may be involved in inflammation and recognition of cytosolic pathogen-associated molecular patterns (PAMPs) not intercepted by membrane-bound receptors. Acts as a negative regulator of the type I interferon signaling pathway by serving as an adapter to promote DTX4-mediated ubiquitination of activated TBK1, and its subsequent degradation. Suppresses NF-kappaB induction by the cytokines TNFA and IL1B, suggesting that it operates at a point of convergence in these two cytokine signaling pathways. The sequence is that of NACHT, LRR and PYD domains-containing protein 4 from Homo sapiens (Human).